Consider the following 398-residue polypeptide: uncharacterized protein (398 aa).

The next 2 membrane-spanning stretches (helical) occupy residues 31–51 and 56–76; these read VVFS…CLLF and AFIT…FFGC.

The protein belongs to the chlamydial CPn_0129/CT_036/TC_0306 family.

It is found in the cell membrane. This is an uncharacterized protein from Chlamydia muridarum (strain MoPn / Nigg).